Consider the following 922-residue polypeptide: DNA gyrase subunit A (922 aa).

The region spanning 34-534 (LPDVRDGLKP…SSAEINIEDL (501 aa)) is the Topo IIA-type catalytic domain. The active-site O-(5'-phospho-DNA)-tyrosine intermediate is the Tyr-122. Positions 561 to 567 (QRRGGRG) match the GyrA-box motif. 2 disordered regions span residues 715–763 (MQPM…VRPM) and 899–922 (IDGE…DPEE). A compositionally biased stretch (acidic residues) spans 723 to 743 (DDVDGDDESVIDAGNDDDGSD).

Belongs to the type II topoisomerase GyrA/ParC subunit family. Heterotetramer, composed of two GyrA and two GyrB chains. In the heterotetramer, GyrA contains the active site tyrosine that forms a transient covalent intermediate with DNA, while GyrB binds cofactors and catalyzes ATP hydrolysis.

It localises to the cytoplasm. The catalysed reaction is ATP-dependent breakage, passage and rejoining of double-stranded DNA.. A type II topoisomerase that negatively supercoils closed circular double-stranded (ds) DNA in an ATP-dependent manner to modulate DNA topology and maintain chromosomes in an underwound state. Negative supercoiling favors strand separation, and DNA replication, transcription, recombination and repair, all of which involve strand separation. Also able to catalyze the interconversion of other topological isomers of dsDNA rings, including catenanes and knotted rings. Type II topoisomerases break and join 2 DNA strands simultaneously in an ATP-dependent manner. The polypeptide is DNA gyrase subunit A (Aeromonas salmonicida).